The sequence spans 72 residues: Probable transcription factor elt-4 (72 aa).

Residues 16 to 40 (CSNCNGTNTTLWRRKAEGDPVCNAC) form a GATA-type zinc finger.

It localises to the nucleus. In terms of biological role, probable transcription factor. Plays a role in regulating heme-dependent expression of heme transporter hrg-1. Modulates lifespan in a daf-16-dependent manner. The protein is Probable transcription factor elt-4 of Caenorhabditis elegans.